The sequence spans 1712 residues: Latent-transforming growth factor beta-binding protein 1 (1712 aa).

Residues 1 to 23 (MAGAWLRWGLLLWAGLLAWSAHG) form the signal peptide. The interval 65–118 (TAASSRALAGPPAERTRRTSQPGGAALPGLRSPLPPEPARPGGPSRQLHSKAGA) is disordered. The EGF-like 1 domain occupies 181 to 213 (TKPSCVPPCQNGGMCLRPQLCVCKPGSKGKACE). Cystine bridges form between Cys-185–Cys-195, Cys-189–Cys-201, and Cys-203–Cys-212. N-linked (GlcNAc...) asparagine glycosylation is found at Asn-339 and Asn-370. Positions 391–423 (RVVICHLPCMNGGQCSSRDKCQCPPNFTGKLCQ) constitute an EGF-like 2 domain. 6 cysteine pairs are disulfide-bonded: Cys-395/Cys-405, Cys-399/Cys-411, Cys-413/Cys-422, Cys-551/Cys-573, Cys-560/Cys-586, and Cys-574/Cys-589. An N-linked (GlcNAc...) asparagine glycan is attached at Asn-416. In terms of domain architecture, TB 1 spans 549-601 (GRCFQETIGSQCGKALPGLSKQEDCCGTVGTSWGFNKCQKCPKKQSYHGYTQM). N-linked (GlcNAc...) asparagine glycosylation occurs at Asn-612. The 41-residue stretch at 618–658 (DINECQLQGVCPNGECLNTMGSYRCSCKMGFGPDPTFSSCV) folds into the EGF-like 3; calcium-binding domain. 7 cysteine pairs are disulfide-bonded: Cys-622-Cys-633, Cys-628-Cys-642, Cys-644-Cys-657, Cys-671-Cys-694, Cys-681-Cys-706, Cys-695-Cys-709, and Cys-696-Cys-721. O-linked (Glc) serine glycosylation is present at Ser-639. Residues 669–721 (GPCYRLVSPGRHCMHPLSVHLTKQICCCSVGKAWGPHCEKCPLPGTAAFKEIC) enclose the TB 2 domain. The segment at 753–799 (NTQPVAKSTHPPPLPAKEEPVEALTSSWEHGPRGAEPEVVTAPPEKE) is disordered. O-linked (GalNAc...) threonine glycosylation is found at Thr-761 and Thr-793. Residues 865–906 (EINECTVNPDICGAGHCINLPVRYTCICYEGYKFSEQLRKCV) enclose the EGF-like 4; calcium-binding domain. 37 cysteine pairs are disulfide-bonded: Cys-869/Cys-881, Cys-876/Cys-890, Cys-892/Cys-905, Cys-911/Cys-923, Cys-918/Cys-932, Cys-934/Cys-947, Cys-953/Cys-964, Cys-959/Cys-973, Cys-976/Cys-988, Cys-994/Cys-1005, Cys-1000/Cys-1014, Cys-1017/Cys-1028, Cys-1034/Cys-1045, Cys-1040/Cys-1054, Cys-1056/Cys-1069, Cys-1075/Cys-1086, Cys-1081/Cys-1095, Cys-1097/Cys-1110, Cys-1116/Cys-1127, Cys-1122/Cys-1136, Cys-1138/Cys-1151, Cys-1157/Cys-1169, Cys-1164/Cys-1178, Cys-1180/Cys-1192, Cys-1198/Cys-1210, Cys-1204/Cys-1219, Cys-1221/Cys-1234, Cys-1240/Cys-1252, Cys-1246/Cys-1261, Cys-1263/Cys-1276, Cys-1282/Cys-1294, Cys-1289/Cys-1303, Cys-1305/Cys-1319, Cys-1340/Cys-1363, Cys-1350/Cys-1375, Cys-1364/Cys-1380, and Cys-1365/Cys-1392. Residues 907-948 (DIDECAQVRHLCSQGRCENTEGSFLCVCPAGFMASEEGTNCI) enclose the EGF-like 5; calcium-binding domain. The O-linked (Glc) serine glycan is linked to Ser-929. In terms of domain architecture, EGF-like 6; calcium-binding spans 949–989 (DVDECLRPDMCRDGRCINTAGAFRCEYCDSGYRMSRRGYCE). Asn-966 carries the (3R)-3-hydroxyasparagine modification. One can recognise an EGF-like 7; calcium-binding domain in the interval 990 to 1029 (DIDECLKPSTCPEEQCVNTPGSYQCVPCTEGFRGWNGQCL). O-linked (Glc) serine glycosylation is present at Ser-1011. In terms of domain architecture, EGF-like 8; calcium-binding spans 1030–1070 (DVDECLQPKVCTNGSCTNLEGSYMCSCHRGYSPTPDHRHCQ). A glycan (N-linked (GlcNAc...) asparagine) is linked at Asn-1042. A glycan (O-linked (Glc) serine) is linked at Ser-1051. Residues 1071–1111 (DIDECQQGNLCMNGQCRNTDGSFRCTCGQGYQLSAAKDQCE) enclose the EGF-like 9; calcium-binding domain. In terms of domain architecture, EGF-like 10; calcium-binding spans 1112–1152 (DIDECEHHHLCSHGQCRNTEGSFQCVCNQGYRASVLGDHCE). Asn-1129 carries the post-translational modification (3R)-3-hydroxyasparagine. Ser-1133 carries an O-linked (Glc) serine glycan. An EGF-like 11; calcium-binding domain is found at 1153–1193 (DINECLEDSSVCQGGDCINTAGSYDCTCPDGFQLNDNKGCQ). Residues 1194 to 1235 (DINECAQPGLCGSHGECLNTQGSFHCVCEQGFSISADGRTCE) enclose the EGF-like 12; calcium-binding domain. Ser-1216 carries O-linked (Glc) serine glycosylation. The 42-residue stretch at 1236–1277 (DIDECVNNTVCDSHGFCDNTAGSFRCLCYQGFQAPQDGQGCV) folds into the EGF-like 13; calcium-binding domain. Asn-1242 is a glycosylation site (N-linked (GlcNAc...) asparagine). In terms of domain architecture, EGF-like 14; calcium-binding spans 1278 to 1320 (DVNECELLSGVCGEAFCENVEGSFLCVCADENQEYSPMTGQCR). The 8-Cys3 region stretch occupies residues 1335–1402 (EEKKECYYNL…PRGKGLVPAG (68 aa)). The region spanning 1338–1392 (KECYYNLNDASLCDNVLAPNVTKQECCCTSGAGWGDNCEIFPCPVQGTAEFTEMC) is the TB 3 domain. Residue Asn-1357 is glycosylated (N-linked (GlcNAc...) asparagine). Ser-1405 bears the Phosphoserine mark. The EGF-like 15; calcium-binding domain occupies 1415–1457 (DADECLLFGEEICKNGYCLNTQPGYECYCKQGTYYDPVKLQCF). Intrachain disulfides connect Cys-1419-Cys-1432, Cys-1427-Cys-1441, Cys-1443-Cys-1456, Cys-1462-Cys-1473, Cys-1468-Cys-1482, Cys-1484-Cys-1497, Cys-1517-Cys-1541, Cys-1527-Cys-1553, Cys-1542-Cys-1556, and Cys-1543-Cys-1568. An EGF-like 16; calcium-binding domain is found at 1458-1498 (DMDECQDPNSCIDGQCVNTEGSYNCFCTHPMVLDASEKRCV). Ser-1479 carries O-linked (Glc) serine glycosylation. Residues 1498 to 1712 (VQPTESNEQI…LNLDKESDLE (215 aa)) form a C-terminal domain region. The 54-residue stretch at 1515-1568 (DLCWEHLSEEYVCSRPLVGKQTTYTECCCLYGEAWGMQCALCPMKDSDDYAQLC) folds into the TB 4 domain. Ser-1588 and Ser-1607 each carry phosphoserine. Residues 1612–1652 (QAEECGILNGCENGRCVRVQEGYTCDCFDGYHLDMAKMTCV) form the EGF-like 17 domain. Cystine bridges form between Cys-1616–Cys-1627, Cys-1622–Cys-1636, Cys-1638–Cys-1651, Cys-1657–Cys-1672, Cys-1667–Cys-1681, and Cys-1683–Cys-1696. The EGF-like 18; calcium-binding domain occupies 1653–1697 (DVNECSELNNRMSLCKNAKCINTEGSYKCLCLPGYIPSDKPNYCT). Ser-1678 is a glycosylation site (O-linked (Glc) serine).

This sequence belongs to the LTBP family. Interacts with TGFB1; associates via disulfide bonds with the Latency-associated peptide chain (LAP) regulatory chain of TGFB1, leading to regulate activation of TGF-beta-1. LTBP1 does not bind directly to TGF-beta-1, the active chain of TGFB1. Interacts (via C-terminal domain) with FBN1 (via N-terminal domain). Interacts with FBN2. Interacts with ADAMTSL2. Interacts with EFEMP2. Contains hydroxylated asparagine residues. Post-translationally, two intrachain disulfide bonds from the TB3 domain are rearranged upon TGFB1 binding, and form interchain bonds with TGFB1 propeptide, anchoring it to the extracellular matrix. In terms of processing, O-glycosylated on serine residues by POGLUT2 and POGLUT3.

The protein resides in the secreted. It is found in the extracellular space. It localises to the extracellular matrix. Its function is as follows. Key regulator of transforming growth factor beta (TGFB1, TGFB2 and TGFB3) that controls TGF-beta activation by maintaining it in a latent state during storage in extracellular space. Associates specifically via disulfide bonds with the Latency-associated peptide (LAP), which is the regulatory chain of TGF-beta, and regulates integrin-dependent activation of TGF-beta. Outcompeted by LRRC32/GARP for binding to LAP regulatory chain of TGF-beta. The polypeptide is Latent-transforming growth factor beta-binding protein 1 (Mus musculus (Mouse)).